A 530-amino-acid chain; its full sequence is Membrane protein insertase YidC (530 aa).

4 consecutive transmembrane segments (helical) span residues 5–25, 348–368, 418–438, and 492–512; these read VVIA…MFPP, YGLA…PLTH, LPML…MFSI, and PVVF…YWLI.

The protein belongs to the OXA1/ALB3/YidC family. Type 1 subfamily. As to quaternary structure, interacts with the Sec translocase complex via SecD. Specifically interacts with transmembrane segments of nascent integral membrane proteins during membrane integration.

It localises to the cell inner membrane. Required for the insertion and/or proper folding and/or complex formation of integral membrane proteins into the membrane. Involved in integration of membrane proteins that insert both dependently and independently of the Sec translocase complex, as well as at least some lipoproteins. Aids folding of multispanning membrane proteins. The chain is Membrane protein insertase YidC from Geotalea daltonii (strain DSM 22248 / JCM 15807 / FRC-32) (Geobacter daltonii).